The sequence spans 82 residues: Conotoxin MiK42 (82 aa).

The N-terminal stretch at 1 to 22 (MKLTCALIVAMLLLTACQLITT) is a signal peptide. Residues 23–49 (DDFRGRQQYRTARSRTKMQNYKIFRLT) constitute a propeptide that is removed on maturation. Intrachain disulfides connect Cys-52–Cys-67, Cys-59–Cys-70, and Cys-66–Cys-80.

Belongs to the conotoxin O1 superfamily. As to expression, expressed by the venom duct.

It localises to the secreted. In Conus miles (Soldier cone), this protein is Conotoxin MiK42.